Here is a 238-residue protein sequence, read N- to C-terminus: tRNA (guanine-N(7)-)-methyltransferase (238 aa).

S-adenosyl-L-methionine contacts are provided by glutamate 70, aspartate 95, aspartate 122, and aspartate 145. Aspartate 145 is an active-site residue. Substrate contacts are provided by residues lysine 149, aspartate 181, and 216-219; that span reads TKFE.

It belongs to the class I-like SAM-binding methyltransferase superfamily. TrmB family.

The catalysed reaction is guanosine(46) in tRNA + S-adenosyl-L-methionine = N(7)-methylguanosine(46) in tRNA + S-adenosyl-L-homocysteine. It participates in tRNA modification; N(7)-methylguanine-tRNA biosynthesis. In terms of biological role, catalyzes the formation of N(7)-methylguanine at position 46 (m7G46) in tRNA. The protein is tRNA (guanine-N(7)-)-methyltransferase of Neisseria gonorrhoeae (strain ATCC 700825 / FA 1090).